The primary structure comprises 169 residues: ATP-dependent Clp protease adapter protein CLPS2, chloroplastic (169 aa).

A chloroplast-targeting transit peptide spans 1 to 33 (MLATRCKCNLPSRSFVAPARSVRTRALHVEGRF). A disordered region spans residues 67–92 (DAKTDNGNNGSNTDKDKKSPPGGGNY).

This sequence belongs to the ClpS family.

Its subcellular location is the plastid. It localises to the chloroplast stroma. Small adapter protein that modulate the activity of plastid Clp protease system (CLPC). Probably involved in substrate selection for plastid CLPC. The sequence is that of ATP-dependent Clp protease adapter protein CLPS2, chloroplastic from Chlamydomonas reinhardtii (Chlamydomonas smithii).